A 123-amino-acid chain; its full sequence is MEMDKQIYLELWNRTPSDVKELVLDSCKSIEGKIEGLTDEFEELEFLSTINVGLTFISNLPKLNKLKKLELSENRISGDLEVLAEKCPNLKHLNLSGNKIKDLSTIELLKKLENLKSLDLFNC.

LRR repeat units lie at residues 43 to 64 (ELEF…PKLN), 65 to 87 (KLKK…AEKC), 89 to 110 (NLKH…ELLK), and 114 to 123 (NLKSLDLFNC).

Belongs to the ANP32 family.

The protein is Putative acidic leucine-rich nuclear phosphoprotein 32 family member C (Anp32c) of Mus musculus (Mouse).